The following is a 97-amino-acid chain: NADH dehydrogenase [ubiquinone] 1 alpha subcomplex subunit 2 (97 aa).

Cysteines 19 and 53 form a disulfide.

This sequence belongs to the complex I NDUFA2 subunit family. In terms of assembly, complex I is composed of at least 49 different subunits.

The protein resides in the mitochondrion inner membrane. In terms of biological role, accessory subunit of the mitochondrial membrane respiratory chain NADH dehydrogenase (Complex I), that is believed not to be involved in catalysis. Complex I functions in the transfer of electrons from NADH to the respiratory chain. The immediate electron acceptor for the enzyme is believed to be ubiquinone. The sequence is that of NADH dehydrogenase [ubiquinone] 1 alpha subcomplex subunit 2 from Arabidopsis thaliana (Mouse-ear cress).